A 301-amino-acid chain; its full sequence is Porphobilinogen deaminase (301 aa).

The residue at position 242 (Cys-242) is an S-(dipyrrolylmethanemethyl)cysteine.

Belongs to the HMBS family. Monomer. The cofactor is dipyrromethane.

It catalyses the reaction 4 porphobilinogen + H2O = hydroxymethylbilane + 4 NH4(+). It functions in the pathway porphyrin-containing compound metabolism; protoporphyrin-IX biosynthesis; coproporphyrinogen-III from 5-aminolevulinate: step 2/4. Functionally, tetrapolymerization of the monopyrrole PBG into the hydroxymethylbilane pre-uroporphyrinogen in several discrete steps. This Rickettsia akari (strain Hartford) protein is Porphobilinogen deaminase.